Consider the following 211-residue polypeptide: Potassium-transporting ATPase KdpC subunit (211 aa).

A helical membrane pass occupies residues valine 13 to phenylalanine 35.

The protein belongs to the KdpC family. In terms of assembly, the system is composed of three essential subunits: KdpA, KdpB and KdpC.

The protein resides in the cell membrane. Part of the high-affinity ATP-driven potassium transport (or Kdp) system, which catalyzes the hydrolysis of ATP coupled with the electrogenic transport of potassium into the cytoplasm. This subunit acts as a catalytic chaperone that increases the ATP-binding affinity of the ATP-hydrolyzing subunit KdpB by the formation of a transient KdpB/KdpC/ATP ternary complex. This Myxococcus xanthus protein is Potassium-transporting ATPase KdpC subunit.